The chain runs to 177 residues: Large ribosomal subunit protein uL6 (177 aa).

Positions 155–177 (EPYKGKGVKHADERIFRKEGKKK) are disordered.

The protein belongs to the universal ribosomal protein uL6 family. In terms of assembly, part of the 50S ribosomal subunit.

Its function is as follows. This protein binds to the 23S rRNA, and is important in its secondary structure. It is located near the subunit interface in the base of the L7/L12 stalk, and near the tRNA binding site of the peptidyltransferase center. The sequence is that of Large ribosomal subunit protein uL6 from Bartonella tribocorum (strain CIP 105476 / IBS 506).